The primary structure comprises 343 residues: Calcium/calmodulin-dependent protein kinase type 1B (343 aa).

The Protein kinase domain maps to 15 to 270; sequence YEIRERLGSG…CQQALRHLWI (256 aa). Residues 21–29 and lysine 44 contribute to the ATP site; that span reads LGSGAFSEV. The active-site Proton acceptor is aspartate 136. The interval 290-311 is calmodulin-binding; that stretch reads KNFARTHWKRAFNATSFLRHIR. The tract at residues 319–343 is disordered; it reads GEGASEQGMARHSHSGLRAGQPPKW.

It belongs to the protein kinase superfamily. CAMK Ser/Thr protein kinase family. CaMK subfamily. Phosphorylated by CAMKK1.

The protein resides in the cytoplasm. It localises to the nucleus. It carries out the reaction L-seryl-[protein] + ATP = O-phospho-L-seryl-[protein] + ADP + H(+). The catalysed reaction is L-threonyl-[protein] + ATP = O-phospho-L-threonyl-[protein] + ADP + H(+). Activated by Ca(2+)/calmodulin. Its function is as follows. Calcium/calmodulin-dependent protein kinase belonging to a proposed calcium-triggered signaling cascade. In vitro phosphorylates CREB1 and SYN1/synapsin I. Phosphorylates and activates CAMK1. The chain is Calcium/calmodulin-dependent protein kinase type 1B (PNCK) from Homo sapiens (Human).